The following is a 40-amino-acid chain: Large ribosomal subunit protein bL36A (40 aa).

The protein belongs to the bacterial ribosomal protein bL36 family.

The polypeptide is Large ribosomal subunit protein bL36A (Renibacterium salmoninarum (strain ATCC 33209 / DSM 20767 / JCM 11484 / NBRC 15589 / NCIMB 2235)).